The chain runs to 727 residues: Tubulin polyglutamylase TTLL11 (727 aa).

Over residues 1–12 the composition is skewed to basic and acidic residues; sequence MRRSSPEKKPEA. Residues 1–88 are disordered; that stretch reads MRRSSPEKKP…ARVVRRLPPA (88 aa). Residues 17–34 show a composition bias toward low complexity; that stretch reads DAAAAAAATAAATESLPA. Composition is skewed to basic and acidic residues over residues 49-63 and 72-81; these read DPERLELEEQPKDVG and HAPEEGEARV. The region spanning 125–477 is the TTL domain; it reads PVTVDSSKAR…EVKVAVIRDT (353 aa). Residues K246, 252-253, 279-282, and 292-294 each bind ATP; these read QG, QEYI, and KFD. Q252 contributes to the a protein binding site. R318 is an L-glutamate binding site. 340–341 contributes to the ATP binding site; it reads TN. L-glutamate contacts are provided by Y342, S343, and K362. Positions 425, 438, and 440 each coordinate Mg(2+). The interval 464–566 is c-MTBD region; sequence LVDEEVKVAV…SICLKQVFPK (103 aa). K470 contacts L-glutamate. Disordered regions lie at residues 530 to 551 and 694 to 727; these read KSFTSKEDLNCDPTGGDSEPNP and RPLQRNPPQMNRPEHSATGSSAPRVIGASKLSQS.

Belongs to the tubulin--tyrosine ligase family. Requires Mg(2+) as cofactor. Highly expressed in brain, kidney, liver, lung, muscle and testis. Expressed in heart, spleen and trachea. In the brain, expressed in ependymal cilia, cortex, corpus callosum and striatum.

Its subcellular location is the cytoplasm. It is found in the cytoskeleton. It localises to the cilium basal body. The enzyme catalyses L-glutamyl-[protein] + L-glutamate + ATP = gamma-L-glutamyl-L-glutamyl-[protein] + ADP + phosphate + H(+). The catalysed reaction is (L-glutamyl)(n)-gamma-L-glutamyl-L-glutamyl-[protein] + L-glutamate + ATP = (L-glutamyl)(n+1)-gamma-L-glutamyl-L-glutamyl-[protein] + ADP + phosphate + H(+). Its function is as follows. Polyglutamylase which modifies tubulin, generating polyglutamate side chains of variable lengths on the gamma-carboxyl group of specific glutamate residues within the C-terminal tail of tubulin. Preferentially mediates ATP-dependent polyglutamate long side-chain elongation over the initiation step of the polyglutamylation reaction. Preferentially modifies the alpha-tubulin tail over a beta-tail. Required for CCSAP localization to both spindle and cilia microtubules. Promotes tubulin polyglutamylation which stimulates spastin/SPAST-mediated microtubule severing, thereby regulating microtubule functions. The sequence is that of Tubulin polyglutamylase TTLL11 from Mus musculus (Mouse).